The sequence spans 470 residues: Transcriptional activator PmfR (470 aa).

As to quaternary structure, forms oligomers in solution, probably homotetramers.

It participates in alkaloid degradation; nicotine degradation [regulation]. In terms of biological role, transcriptional regulator involved in the activation of the purU-mabO-folD-nepA-nepB and mao-ORF55-nbr operons implicated in the nicotine catabolic pathway. The sequence GTTT-14 bp-AAAC seems to be the core binding site of the regulator upstream of the -35 promoter region of the operon. This is Transcriptional activator PmfR (pmfR) from Paenarthrobacter nicotinovorans (Arthrobacter nicotinovorans).